Reading from the N-terminus, the 236-residue chain is Purine nucleoside phosphorylase DeoD-type 2 (236 aa).

A purine D-ribonucleoside is bound at residue His5. Phosphate contacts are provided by residues Gly21, Arg25, Arg44, and 88 to 91 (RVGS). A purine D-ribonucleoside is bound by residues 180 to 182 (DME) and 204 to 205 (SD). The active-site Proton donor is Asp205.

This sequence belongs to the PNP/UDP phosphorylase family. Homohexamer; trimer of homodimers.

It carries out the reaction a purine D-ribonucleoside + phosphate = a purine nucleobase + alpha-D-ribose 1-phosphate. The catalysed reaction is a purine 2'-deoxy-D-ribonucleoside + phosphate = a purine nucleobase + 2-deoxy-alpha-D-ribose 1-phosphate. Its function is as follows. Catalyzes the reversible phosphorolytic breakdown of the N-glycosidic bond in the beta-(deoxy)ribonucleoside molecules, with the formation of the corresponding free purine bases and pentose-1-phosphate. The protein is Purine nucleoside phosphorylase DeoD-type 2 of Vibrio vulnificus (strain CMCP6).